The chain runs to 697 residues: Potassium-transporting ATPase ATP-binding subunit (697 aa).

Helical transmembrane passes span 55 to 75, 79 to 99, 245 to 265, and 271 to 291; these read PIMF…FLPS, SIPG…VLFA, LTLI…YLGF, and VLVA…LSAI. The active-site 4-aspartylphosphate intermediate is Asp-324. ATP-binding positions include Asp-361, Glu-365, 393–400, and Lys-412; that span reads FKAETRMS. Mg(2+) is bound by residues Asp-535 and Asp-539. 3 consecutive transmembrane segments (helical) span residues 605-625, 633-653, and 677-697; these read FAII…LNIM, AILS…PLAM, and GGVI…GLFI.

It belongs to the cation transport ATPase (P-type) (TC 3.A.3) family. Type IA subfamily. As to quaternary structure, the system is composed of three essential subunits: KdpA, KdpB and KdpC.

It localises to the cell membrane. It carries out the reaction K(+)(out) + ATP + H2O = K(+)(in) + ADP + phosphate + H(+). In terms of biological role, part of the high-affinity ATP-driven potassium transport (or Kdp) system, which catalyzes the hydrolysis of ATP coupled with the electrogenic transport of potassium into the cytoplasm. This subunit is responsible for energy coupling to the transport system and for the release of the potassium ions to the cytoplasm. This Bacillus cereus (strain ATCC 14579 / DSM 31 / CCUG 7414 / JCM 2152 / NBRC 15305 / NCIMB 9373 / NCTC 2599 / NRRL B-3711) protein is Potassium-transporting ATPase ATP-binding subunit.